A 901-amino-acid chain; its full sequence is HTH-type transcriptional regulator MalT (901 aa).

39–46 is a binding site for ATP; it reads SPAGYGKT. Residues 829-894 enclose the HTH luxR-type domain; that stretch reads ELIRTSPLTQ…AAVQHAQKLL (66 aa). The H-T-H motif DNA-binding region spans 853 to 872; it reads NEQIAGELEVAATTIKTHIR.

This sequence belongs to the MalT family. As to quaternary structure, monomer in solution. Oligomerizes to an active state in the presence of the positive effectors ATP and maltotriose.

With respect to regulation, activated by ATP and maltotriose, which are both required for DNA binding. In terms of biological role, positively regulates the transcription of the maltose regulon whose gene products are responsible for uptake and catabolism of malto-oligosaccharides. Specifically binds to the promoter region of its target genes, recognizing a short DNA motif called the MalT box. This chain is HTH-type transcriptional regulator MalT, found in Escherichia coli O7:K1 (strain IAI39 / ExPEC).